The chain runs to 340 residues: DNA repair protein RAD51 homolog B (340 aa).

The segment at 1-22 is disordered; the sequence is MSSSSAHQKASPPIEEEATEHG. One can recognise a HhH domain in the interval 49–78; sequence TVESVAYSPRKDLLQIKGISEAKVDKIIEA. 128 to 135 lines the ATP pocket; it reads GEFRSGKT.

It belongs to the RecA family. RAD51 subfamily. In terms of assembly, self-associates and may interact with XRCC3 homolog. Highly expressed in mitotic and meiotic tissues, but low levels in differentiated tissues.

It is found in the nucleus. Its function is as follows. Binds to single and double-stranded DNA and exhibits DNA-dependent ATPase activity. Unwinds duplex DNA. Component of the meiotic recombination pathway. Seems to play a role in mediating chromosome homology search, chromosome pairing and synapsis at early stages and probably chromosome crossing-over at later stages in meiosis. Probably is involved in the repair of meiotic double strand breaks (DBSs) and in homologous recombination. The chain is DNA repair protein RAD51 homolog B (RAD51B) from Zea mays (Maize).